The sequence spans 245 residues: Carboxy-S-adenosyl-L-methionine synthase (245 aa).

S-adenosyl-L-methionine-binding positions include Y42, 67-69 (GCS), 92-93 (DN), 120-121 (DI), N135, and R202.

Belongs to the class I-like SAM-binding methyltransferase superfamily. Cx-SAM synthase family. In terms of assembly, homodimer.

It carries out the reaction prephenate + S-adenosyl-L-methionine = carboxy-S-adenosyl-L-methionine + 3-phenylpyruvate + H2O. Its function is as follows. Catalyzes the conversion of S-adenosyl-L-methionine (SAM) to carboxy-S-adenosyl-L-methionine (Cx-SAM). This Vibrio campbellii (strain ATCC BAA-1116) protein is Carboxy-S-adenosyl-L-methionine synthase.